Reading from the N-terminus, the 250-residue chain is Homeobox protein Dlx4a (250 aa).

The segment at residues 123–182 (IRKPRTIYSSLQLQALNQRFQQTQYLALPERADLAAKLGLTQTQVKIWFQNKRSKYKKIM) is a DNA-binding region (homeobox). Residues 182-202 (MKHGSSGPEGEHLQAASASGA) are disordered.

This sequence belongs to the distal-less homeobox family.

It is found in the nucleus. The sequence is that of Homeobox protein Dlx4a (dlx4a) from Danio rerio (Zebrafish).